Here is a 499-residue protein sequence, read N- to C-terminus: UDP-N-acetylmuramoylalanine--D-glutamate ligase (499 aa).

128–134 (GTNGKTT) lines the ATP pocket.

This sequence belongs to the MurCDEF family.

The protein resides in the cytoplasm. It carries out the reaction UDP-N-acetyl-alpha-D-muramoyl-L-alanine + D-glutamate + ATP = UDP-N-acetyl-alpha-D-muramoyl-L-alanyl-D-glutamate + ADP + phosphate + H(+). It functions in the pathway cell wall biogenesis; peptidoglycan biosynthesis. Its function is as follows. Cell wall formation. Catalyzes the addition of glutamate to the nucleotide precursor UDP-N-acetylmuramoyl-L-alanine (UMA). This Rhodococcus jostii (strain RHA1) protein is UDP-N-acetylmuramoylalanine--D-glutamate ligase.